The primary structure comprises 663 residues: Protein THEMIS2 (663 aa).

2 CABIT regions span residues 2-237 (EPVP…TASS) and 238-515 (QHIH…EAEG). A disordered region spans residues 545–663 (ASESQAPPPR…DMDDHDYEEI (119 aa)). Positions 559 to 577 (QGINKKQQNIQSCKESSVK) are enriched in polar residues. T596 is subject to Phosphothreonine. Over residues 621-641 (NPQTQNSVLSMKPKTSSSLGK) the composition is skewed to polar residues. A compositionally biased stretch (acidic residues) spans 653 to 663 (PDMDDHDYEEI). Position 660 is a phosphotyrosine (Y660).

This sequence belongs to the themis family. As to quaternary structure, interacts with VAV1. Interacts with LAT. Interacts constitutively with GRB2, LYN and PLCG2; these interactions increase the activation of PLCG2 and its downstream pathways following B cell receptor stimulation. In terms of processing, phosphorylation at Tyr-660 is induced by LPS. Phosphorylated by Src kinases (Lck or Fyn) following BCR engagement. As to expression, expressed in both developing and mature B-cells with high expression in immature, follicular and B1 B cells. Also expressed in macrophages and dendritic cells. Down-regulated in splenocytes of mice developing arthritis in a collagen-induced model, not in those of mice failing to develop the disease. Transiently down-regulated in splenocytes of mice infected with influenza virus.

The protein resides in the nucleus. It localises to the cytoplasm. May constitute a control point in macrophage inflammatory response, promoting LPS-induced TLR4-mediated TNF production. Determines the threshold for activation of B cells by low-affinity and low-avidity ligands via PLCG2 activation and its downstream pathways. This Mus musculus (Mouse) protein is Protein THEMIS2.